A 1565-amino-acid polypeptide reads, in one-letter code: MLSWRLQTGPEKAELQELNARLYDYVCRVRELERENLLLEEELRGRRGREGLWAEGQARCAEEARSLRQQLDELSWATALAEGERDALRRELRELQRLDAEERAARGRLDAELGAQQRELQEALGARAALEALLGRLQAERRGLDAAHERDVRELRARAASLTMHFRARATGPAAPPPRLREVHDSYALLVAESWRETVQLYEDEVRELEEALRRGQESRLQAEEETRLCAQEAEALRREALGLEQLRARLEDALLRMREEYGIQAEERQRVIDCLEDEKATLTLAMADWLRDYQDLLQVKTGLSLEVATYRALLEGESNPEIVIWAEHVENMPSEFRNKSYHYTDSLLQRENERNLFSRQKAPLASFNHSSALYSNLSGHRGSQTGTSIGGDARRGFLGSGYSSSATTQQENSYGKAVSSQTNVRTFSPTYGLLRNTEAQVKTFPDRPKAGDTREVPVYIGEDSTIARESYRDRRDKVAAGASESTRSNERTVILGKKTEVKATREQERNRPETIRTKPEEKMFDSKEKASEERNLRWEELTKLDKEARQRESQQMKEKAKEKDSPKEKSVREREVPISLEVSQDRRAEVSPKGLQTPVKDAGGGTGREAEARELRFRLGTSDATGSLQGDSMTETVAENIVTSILKQFTQSPETEASADSFPDTKVTYVDRKELPGERKTKTEIVVESKLTEDVDVSDEAGLDYLLSKDIKEVGLKGKSAEQMIGDIINLGLKGREGRAKVVNVEIVEEPVSYVSGEKPEEFSVPFKVEEVEDVSPGPWGLVKEEEGYGESDVTFSVNQHRRTKQPQENTTHVEEVTEAGDSEGEQSYFVSTPDEHPGGHDRDDGSVYGQIHIEEESTIRYSWQDEIVQGTRRRTQKDGAVGEKVVKPLDVPAPSLEGDLGSTHWKEQARSGEFHAEPTVIEKEIKIPHEFHTSMKGISSKEPRQQLVEVIGQLEETLPERMREELSALTREGQGGPGSVSVDVKKVQGAGGSSVTLVAEVNVSQTVDADRLDLEELSKDEASEMEKAVESVVRESLSRQRSPAPGSPDEEGGAEAPAAGIRFRRWATRELYIPSGESEVAGGASHSSGQRTPQGPVSATVEVSSPTGFAQSQVLEDVSQAARHIKLGPSEVWRTERMSYEGPTAEVVEVSAGGDLSQAASPTGASRSVRHVTLGPGQSPLSREVIFLGPAPACPEAWGSPEPGPAESSADMDGSGRHSTFGCRQFHAEKEIIFQGPISAAGKVGDYFATEESVGTQTSVRQLQLGPKEGFSGQIQFTAPLSDKVELGVIGDSVHMEGLPGSSTSIRHISIGPQRHQTTQQIVYHGLVPQLGESGDSESTVHGEGSADVHQATHSHTSGRQTVMTEKSTFQSVVSESPQEDSAEDTSGAEMTSGVSRSFRHIRLGPTETETSEHIAIRGPVSRTFVLAGSADSPELGKLADSSRTLRHIAPGPKETSFTFQMDVSNVEAIRSRTQEAGALGVSDRGSWRDADSRNDQAVGVSFKASAGEGDQAHREQGKEQAMFDKKVQLQRMVDQRSVISDEKKVALLYLDNEEEENDGHWF.

Residues 1–10 (MLSWRLQTGP) form a head region. Residues 11–49 (EKAELQELNARLYDYVCRVRELERENLLLEEELRGRRGR) are coil 1A. Positions 11-320 (EKAELQELNA…YRALLEGESN (310 aa)) are interaction with DMD and UTRN. Residues 11–322 (EKAELQELNA…ALLEGESNPE (312 aa)) form the IF rod domain. A linker 1 region spans residues 50–58 (EGLWAEGQA). The coil 1B stretch occupies residues 59–163 (RCAEEARSLR…ELRARAASLT (105 aa)). The linker 12 stretch occupies residues 164 to 186 (MHFRARATGPAAPPPRLREVHDS). Residues 187-300 (YALLVAESWR…LRDYQDLLQV (114 aa)) form a coil 2 region. Residues 301 to 1565 (KTGLSLEVAT…EEEENDGHWF (1265 aa)) are tail. The disordered stretch occupies residues 401–421 (SGYSSSATTQQENSYGKAVSS). Residues 402-421 (GYSSSATTQQENSYGKAVSS) are compositionally biased toward polar residues. Residue serine 429 is modified to Phosphoserine. A disordered region spans residues 472–609 (YRDRRDKVAA…VKDAGGGTGR (138 aa)). The span at 498–577 (KKTEVKATRE…KEKSVREREV (80 aa)) shows a compositional bias: basic and acidic residues. Residues threonine 598 and threonine 651 each carry the phosphothreonine modification. Phosphoserine is present on residues serine 653 and serine 777. Residues 1019–1040 (LSKDEASEMEKAVESVVRESLS) show a composition bias toward basic and acidic residues. The segment at 1019–1060 (LSKDEASEMEKAVESVVRESLSRQRSPAPGSPDEEGGAEAPA) is disordered. A phosphoserine mark is found at serine 1044, serine 1049, serine 1077, serine 1087, serine 1181, and serine 1184. Residues 1080–1105 (SEVAGGASHSSGQRTPQGPVSATVEV) form a disordered region. The span at 1087–1105 (SHSSGQRTPQGPVSATVEV) shows a compositional bias: polar residues. Positions 1152-1463 (VSAGGDLSQA…GPKETSFTFQ (312 aa)) are interaction with TLN1 and VCL. 2 disordered regions span residues 1198–1221 (EAWGSPEPGPAESSADMDGSGRHS) and 1332–1415 (QLGE…ETSE). Residues 1244 to 1563 (GKVGDYFATE…DNEEEENDGH (320 aa)) form an interaction with DMD and UTRN region. The span at 1354 to 1379 (ATHSHTSGRQTVMTEKSTFQSVVSES) shows a compositional bias: polar residues. Position 1435 is a phosphoserine (serine 1435). Omega-N-methylarginine is present on arginine 1487. The disordered stretch occupies residues 1505 to 1525 (FKASAGEGDQAHREQGKEQAM). Positions 1513–1525 (DQAHREQGKEQAM) are enriched in basic and acidic residues.

It belongs to the intermediate filament family. In terms of assembly, interacts with GFAP and VIM. Isoform 1 interacts with TLN1 and VCL. Isoform 2 interacts with DES and DTNA. Isoform 1 and isoform 2 interact with DMD and UTRN. Isoform 2 is strongly detected in adult heart, fetal skeletal muscles and fetal heart. Isoform 1 is weakly detected in fetal heart and also in fetal skeletal muscle. Isoform 1 and isoform 2 are detected in adult bladder (at protein level). The mRNA is predominantly expressed in heart and muscle with some expression in brain which may be due to tissue-specific isoforms.

The protein localises to the cytoplasm. Its subcellular location is the cytoskeleton. It is found in the cell junction. It localises to the adherens junction. In terms of biological role, type-VI intermediate filament (IF) which plays an important cytoskeletal role within the muscle cell cytoskeleton. It forms heteromeric IFs with desmin and/or vimentin, and via its interaction with cytoskeletal proteins alpha-dystrobrevin, dystrophin, talin-1, utrophin and vinculin, is able to link these heteromeric IFs to adherens-type junctions, such as to the costameres, neuromuscular junctions, and myotendinous junctions within striated muscle cells. The sequence is that of Synemin from Homo sapiens (Human).